A 606-amino-acid polypeptide reads, in one-letter code: Homeobox protein B-H1 (606 aa).

Residues 1–14 are compositionally biased toward polar residues; sequence MKDSMSILTQTPSE. Disordered stretches follow at residues 1 to 65, 104 to 188, 261 to 340, and 508 to 606; these read MKDS…PAVA, YKQQ…HPHA, APAG…AFTD, and AAAN…QIQV. Basic residues predominate over residues 21–40; sequence QLHHHLSHHHHPALHHHPVL. Low complexity predominate over residues 41-65; the sequence is QHHYSLQQQHQQQQQQQPPAPPAVA. A compositionally biased stretch (basic residues) spans 108–118; sequence QQHHHHHHQSH. Positions 119–138 are enriched in low complexity; that stretch reads HNNNNHSGGSSGGTSPTHHN. A compositionally biased stretch (basic residues) spans 166 to 188; sequence HHLHPQSHPHPHPHPHSHPHPHA. Over residues 266–284 the composition is skewed to acidic residues; that stretch reads ELDDSSDYHEENEDCDSDE. The segment covering 286–295 has biased composition (gly residues); it reads GSAGGGGGGS. The span at 297–314 shows a compositional bias: basic and acidic residues; it reads HMDDHSVCSNGGKDDDGN. Residues 315-325 show a composition bias toward polar residues; the sequence is SIKSGSTSDMS. The segment at residues 331-390 is a DNA-binding region (homeobox); that stretch reads QRKARTAFTDHQLQTLEKSFERQKYLSVQERQELAHKLDLSDCQVKTWYQNRRTKWMRQT. Residues 513 to 522 show a composition bias toward pro residues; sequence GGPPPPPPPS. Over residues 523–534 the composition is skewed to low complexity; it reads SAAAATGGSPSP. The segment covering 561–576 has biased composition (pro residues); the sequence is ASPPLPLPLARPPSTP.

It belongs to the Antp homeobox family. Abundant in the eye-antenna imaginal disk.

The protein resides in the nucleus. In terms of biological role, functionally required in R1 and R6 receptor cells and primary pigment cells for normal eye development. The chain is Homeobox protein B-H1 (B-H1) from Drosophila ananassae (Fruit fly).